A 249-amino-acid chain; its full sequence is DNA repair protein RecO (249 aa).

The protein belongs to the RecO family.

Its function is as follows. Involved in DNA repair and RecF pathway recombination. The chain is DNA repair protein RecO from Lactobacillus delbrueckii subsp. bulgaricus (strain ATCC BAA-365 / Lb-18).